The chain runs to 307 residues: Solute carrier family 25 member 53 (307 aa).

The disordered stretch occupies residues 1–23 (MGEQNHSPGKELQHRTRAEAPGK). Basic and acidic residues predominate over residues 8-22 (PGKELQHRTRAEAPG). Solcar repeat units lie at residues 25 to 105 (SWHS…LLCF), 112 to 202 (HTLG…IQDG), and 210 to 302 (HWVP…HSRK). The next 6 helical transmembrane spans lie at 31 to 51 (YALGAVSNFMSTFLTFPIYKV), 82 to 102 (YPPLLSKTLQGTLLFGTYDSL), 112 to 132 (HTLGHRWAAGLMSGVVEAVAL), 181 to 201 (VLARNSLGSALYFSFKDPIQD), 215 to 235 (LVSGSVNGTITCLVLYPLIVL), and 269 to 290 (IYRGGSLVILRSSVTWGLTTAI).

Belongs to the mitochondrial carrier (TC 2.A.29) family.

Its subcellular location is the mitochondrion inner membrane. This is Solute carrier family 25 member 53 (SLC25A53) from Homo sapiens (Human).